A 92-amino-acid chain; its full sequence is Protease inhibitors (92 aa).

The first 19 residues, 1–19 (MKFALALCAAVLLVVLVQA), serve as a signal peptide directing secretion. Pacifastin domains are found at residues 20–54 (EEKC…CQPA) and 57–92 (EISC…CPNQ). 6 cysteine pairs are disulfide-bonded: C23-C38, C33-C51, C36-C46, C60-C75, C70-C89, and C73-C84. A glycan (O-linked (Fuc) threonine) is linked at T65.

The protein belongs to the protease inhibitor I19 family. In terms of tissue distribution, brain and fat body.

Its subcellular location is the secreted. In terms of biological role, both LCMI I and II are inhibitors of chymotrypsin and elastase (in vitro). They both inhibit the prophenol oxidase activation cascade. The polypeptide is Protease inhibitors (Locusta migratoria (Migratory locust)).